The sequence spans 450 residues: mRNA cleavage and polyadenylation factor CLP1 (450 aa).

ATP is bound by residues Glu-29, Lys-67, and 137–142 (NSGKTS).

This sequence belongs to the Clp1 family. Clp1 subfamily. In terms of assembly, component of a pre-mRNA cleavage factor complex. Interacts directly with PCF11.

It is found in the nucleus. Required for endonucleolytic cleavage during polyadenylation-dependent pre-mRNA 3'-end formation. In Yarrowia lipolytica (strain CLIB 122 / E 150) (Yeast), this protein is mRNA cleavage and polyadenylation factor CLP1.